We begin with the raw amino-acid sequence, 315 residues long: Ribosomal RNA small subunit methyltransferase H (315 aa).

Residues 37–39 (GGH), Asp57, Phe83, Asp105, and Gln112 each bind S-adenosyl-L-methionine.

The protein belongs to the methyltransferase superfamily. RsmH family.

The protein resides in the cytoplasm. It carries out the reaction cytidine(1402) in 16S rRNA + S-adenosyl-L-methionine = N(4)-methylcytidine(1402) in 16S rRNA + S-adenosyl-L-homocysteine + H(+). Specifically methylates the N4 position of cytidine in position 1402 (C1402) of 16S rRNA. In Pseudomonas entomophila (strain L48), this protein is Ribosomal RNA small subunit methyltransferase H.